The sequence spans 101 residues: Small ribosomal subunit protein uS14 (101 aa).

The protein belongs to the universal ribosomal protein uS14 family. Part of the 30S ribosomal subunit. Contacts proteins S3 and S10.

Binds 16S rRNA, required for the assembly of 30S particles and may also be responsible for determining the conformation of the 16S rRNA at the A site. The chain is Small ribosomal subunit protein uS14 from Shewanella loihica (strain ATCC BAA-1088 / PV-4).